A 224-amino-acid chain; its full sequence is UPF0758 protein RSc2444 (224 aa).

An MPN domain is found at 102–224; sequence TLESPQSVKD…VYSFLEHGKM (123 aa). Zn(2+)-binding residues include His173, His175, and Asp186. The JAMM motif motif lies at 173-186; the sequence is HNHPTGHVEPSESD.

The protein belongs to the UPF0758 family.

This is UPF0758 protein RSc2444 from Ralstonia nicotianae (strain ATCC BAA-1114 / GMI1000) (Ralstonia solanacearum).